The sequence spans 233 residues: Type II methyltransferase M.MunI (233 aa).

Belongs to the MT-A70-like family.

The enzyme catalyses a 2'-deoxyadenosine in DNA + S-adenosyl-L-methionine = an N(6)-methyl-2'-deoxyadenosine in DNA + S-adenosyl-L-homocysteine + H(+). A methylase that recognizes the double-stranded sequence 5'-CAATTG-3', methylates A-3 on both strands, and protects the DNA from cleavage by the MunI endonuclease. The sequence is that of Type II methyltransferase M.MunI from Mycoplasma sp.